Consider the following 838-residue polypeptide: Probable beta-glucosidase I (838 aa).

The N-linked (GlcNAc...) asparagine glycan is linked to Asn197. The active site involves Asp225. Residues 395-555 (DGKKGFKFRV…SQEELISKAA (161 aa)) enclose the PA14 domain. Asn493 is a glycosylation site (N-linked (GlcNAc...) asparagine).

Belongs to the glycosyl hydrolase 3 family.

It is found in the secreted. It catalyses the reaction Hydrolysis of terminal, non-reducing beta-D-glucosyl residues with release of beta-D-glucose.. It participates in glycan metabolism; cellulose degradation. Its function is as follows. Beta-glucosidases are one of a number of cellulolytic enzymes involved in the degradation of cellulosic biomass. Catalyzes the last step releasing glucose from the inhibitory cellobiose. The sequence is that of Probable beta-glucosidase I (bglI) from Aspergillus fumigatus (strain ATCC MYA-4609 / CBS 101355 / FGSC A1100 / Af293) (Neosartorya fumigata).